The chain runs to 159 residues: Ribosomal RNA large subunit methyltransferase H (159 aa).

Residues Leu-76, Gly-108, and 127–132 each bind S-adenosyl-L-methionine; that span reads FGLLTF.

The protein belongs to the RNA methyltransferase RlmH family. As to quaternary structure, homodimer.

It localises to the cytoplasm. It carries out the reaction pseudouridine(1915) in 23S rRNA + S-adenosyl-L-methionine = N(3)-methylpseudouridine(1915) in 23S rRNA + S-adenosyl-L-homocysteine + H(+). Specifically methylates the pseudouridine at position 1915 (m3Psi1915) in 23S rRNA. The chain is Ribosomal RNA large subunit methyltransferase H from Streptococcus thermophilus (strain ATCC BAA-491 / LMD-9).